The chain runs to 328 residues: DNA-directed RNA polymerase subunit alpha (328 aa).

An alpha N-terminal domain (alpha-NTD) region spans residues 1-231 (MIYQMQMPEK…EHVSLFANFS (231 aa)). The alpha C-terminal domain (alpha-CTD) stretch occupies residues 252 to 328 (MRKMLLTRIE…MDITKYQMKG (77 aa)).

This sequence belongs to the RNA polymerase alpha chain family. Homodimer. The RNAP catalytic core consists of 2 alpha, 1 beta, 1 beta' and 1 omega subunit. When a sigma factor is associated with the core the holoenzyme is formed, which can initiate transcription.

The catalysed reaction is RNA(n) + a ribonucleoside 5'-triphosphate = RNA(n+1) + diphosphate. Functionally, DNA-dependent RNA polymerase catalyzes the transcription of DNA into RNA using the four ribonucleoside triphosphates as substrates. This Chlorobium phaeobacteroides (strain BS1) protein is DNA-directed RNA polymerase subunit alpha.